The following is a 275-amino-acid chain: MGPAGVAARPGRFFGVYLLYCLNPRYRGRVYVGFTVNTARRVQQHNGGRKKGGAWRTSGRGPWEMVLVVHGFPSSVAALRFEWAWQHPHASRRLAHVGPRLRGETAFAFHLRVLAHMLRAPPWARLPLTLRWVRPDLRQDLCLPPPPHVPLAFGPPPPQAPAPRRRAGPFDDAEPEPDQGDPGACCSLCAQTIQDEEGPLCCPHPGCLLRAHVICLAEEFLQEEPGQLLPLEGQCPCCEKSLLWGDLIWLCQMDTEKEVEDSELEEAHWTDLLET.

The GIY-YIG domain maps to 12 to 95 (RFFGVYLLYC…QHPHASRRLA (84 aa)). The segment covering 148–161 (HVPLAFGPPPPQAP) has biased composition (pro residues). Positions 148–179 (HVPLAFGPPPPQAPAPRRRAGPFDDAEPEPDQ) are disordered. The segment at 186-238 (CSLCAQTIQDEEGPLCCPHPGCLLRAHVICLAEEFLQEEPGQLLPLEGQCPCC) adopts an SLX1-type zinc-finger fold.

This sequence belongs to the SLX1 family. In terms of assembly, forms a heterodimer with SLX4. Requires a divalent metal cation as cofactor.

It localises to the nucleus. Its function is as follows. Catalytic subunit of the SLX1-SLX4 structure-specific endonuclease that resolves DNA secondary structures generated during DNA repair and recombination. Has endonuclease activity towards branched DNA substrates, introducing single-strand cuts in duplex DNA close to junctions with ss-DNA. Has a preference for 5'-flap structures, and promotes symmetrical cleavage of static and migrating Holliday junctions (HJs). Resolves HJs by generating two pairs of ligatable, nicked duplex products. The polypeptide is Structure-specific endonuclease subunit SLX1 (Homo sapiens (Human)).